Consider the following 327-residue polypeptide: Methionyl-tRNA formyltransferase (327 aa).

(6S)-5,6,7,8-tetrahydrofolate is bound at residue 121-124 (SLLP).

It belongs to the Fmt family.

It catalyses the reaction L-methionyl-tRNA(fMet) + (6R)-10-formyltetrahydrofolate = N-formyl-L-methionyl-tRNA(fMet) + (6S)-5,6,7,8-tetrahydrofolate + H(+). Functionally, attaches a formyl group to the free amino group of methionyl-tRNA(fMet). The formyl group appears to play a dual role in the initiator identity of N-formylmethionyl-tRNA by promoting its recognition by IF2 and preventing the misappropriation of this tRNA by the elongation apparatus. The sequence is that of Methionyl-tRNA formyltransferase from Burkholderia ambifaria (strain ATCC BAA-244 / DSM 16087 / CCUG 44356 / LMG 19182 / AMMD) (Burkholderia cepacia (strain AMMD)).